The primary structure comprises 54 residues: Large ribosomal subunit protein bL33 (54 aa).

Belongs to the bacterial ribosomal protein bL33 family.

In Frankia alni (strain DSM 45986 / CECT 9034 / ACN14a), this protein is Large ribosomal subunit protein bL33.